The primary structure comprises 481 residues: Glutamate--tRNA ligase (481 aa).

A 'HIGH' region motif is present at residues 10 to 20 (PSPTGHLHIGN). Positions 251-255 (KLSKR) match the 'KMSKS' region motif. Lys-254 is a binding site for ATP.

This sequence belongs to the class-I aminoacyl-tRNA synthetase family. Glutamate--tRNA ligase type 1 subfamily. As to quaternary structure, monomer.

Its subcellular location is the cytoplasm. It carries out the reaction tRNA(Glu) + L-glutamate + ATP = L-glutamyl-tRNA(Glu) + AMP + diphosphate. In terms of biological role, catalyzes the attachment of glutamate to tRNA(Glu) in a two-step reaction: glutamate is first activated by ATP to form Glu-AMP and then transferred to the acceptor end of tRNA(Glu). The sequence is that of Glutamate--tRNA ligase from Exiguobacterium sibiricum (strain DSM 17290 / CCUG 55495 / CIP 109462 / JCM 13490 / 255-15).